We begin with the raw amino-acid sequence, 190 residues long: Elongation factor P 2 (190 aa).

This sequence belongs to the elongation factor P family.

Its subcellular location is the cytoplasm. It participates in protein biosynthesis; polypeptide chain elongation. In terms of biological role, involved in peptide bond synthesis. Stimulates efficient translation and peptide-bond synthesis on native or reconstituted 70S ribosomes in vitro. Probably functions indirectly by altering the affinity of the ribosome for aminoacyl-tRNA, thus increasing their reactivity as acceptors for peptidyl transferase. The sequence is that of Elongation factor P 2 (efp2) from Chlamydia muridarum (strain MoPn / Nigg).